The sequence spans 396 residues: 1-deoxy-D-xylulose 5-phosphate reductoisomerase (396 aa).

The NADPH site is built by Thr15, Gly16, Ser17, Ile18, Gly41, and Asn130. Lys131 contacts 1-deoxy-D-xylulose 5-phosphate. Glu132 is an NADPH binding site. Asp155 contributes to the Mn(2+) binding site. 4 residues coordinate 1-deoxy-D-xylulose 5-phosphate: Ser156, Glu157, Ser181, and His204. Glu157 serves as a coordination point for Mn(2+). Residue Gly210 participates in NADPH binding. 1-deoxy-D-xylulose 5-phosphate contacts are provided by Ser217, Asn222, Lys223, and Glu226. Position 226 (Glu226) interacts with Mn(2+).

Belongs to the DXR family. It depends on Mg(2+) as a cofactor. The cofactor is Mn(2+).

It catalyses the reaction 2-C-methyl-D-erythritol 4-phosphate + NADP(+) = 1-deoxy-D-xylulose 5-phosphate + NADPH + H(+). It functions in the pathway isoprenoid biosynthesis; isopentenyl diphosphate biosynthesis via DXP pathway; isopentenyl diphosphate from 1-deoxy-D-xylulose 5-phosphate: step 1/6. Functionally, catalyzes the NADPH-dependent rearrangement and reduction of 1-deoxy-D-xylulose-5-phosphate (DXP) to 2-C-methyl-D-erythritol 4-phosphate (MEP). This chain is 1-deoxy-D-xylulose 5-phosphate reductoisomerase, found in Bifidobacterium longum (strain DJO10A).